Here is a 294-residue protein sequence, read N- to C-terminus: Ribosomal RNA small subunit methyltransferase A (294 aa).

Residues asparagine 29, valine 31, glycine 56, glutamate 77, aspartate 107, and asparagine 126 each coordinate S-adenosyl-L-methionine.

This sequence belongs to the class I-like SAM-binding methyltransferase superfamily. rRNA adenine N(6)-methyltransferase family. RsmA subfamily.

The protein resides in the cytoplasm. The enzyme catalyses adenosine(1518)/adenosine(1519) in 16S rRNA + 4 S-adenosyl-L-methionine = N(6)-dimethyladenosine(1518)/N(6)-dimethyladenosine(1519) in 16S rRNA + 4 S-adenosyl-L-homocysteine + 4 H(+). In terms of biological role, specifically dimethylates two adjacent adenosines (A1518 and A1519) in the loop of a conserved hairpin near the 3'-end of 16S rRNA in the 30S particle. May play a critical role in biogenesis of 30S subunits. In Mycobacterium sp. (strain MCS), this protein is Ribosomal RNA small subunit methyltransferase A.